The chain runs to 365 residues: 1-acyl-sn-glycerol-3-phosphate acyltransferase epsilon (365 aa).

A helical transmembrane segment spans residues 15–35; it reads LLPSVLLLGSAPTYLLAWTLW. The HXXXXD motif motif lies at 93-98; it reads HQSTVD. A helical membrane pass occupies residues 345–365; sequence LYMGTWLYGTLLGCLWFVIKA.

It belongs to the 1-acyl-sn-glycerol-3-phosphate acyltransferase family. Widely expressed.

The protein localises to the endoplasmic reticulum membrane. It is found in the nucleus envelope. It localises to the mitochondrion. It catalyses the reaction a 1-acyl-sn-glycero-3-phosphate + an acyl-CoA = a 1,2-diacyl-sn-glycero-3-phosphate + CoA. The enzyme catalyses 1-(9Z-octadecenoyl)-sn-glycero-3-phosphate + tetradecanoyl-CoA = 1-(9Z)-octadecenoyl-2-tetradecanoyl-sn-glycero-3-phosphate + CoA. The catalysed reaction is pentadecanoyl-CoA + 1-(9Z-octadecenoyl)-sn-glycero-3-phosphate = 1-(9Z)-octadecenoyl-2-pentadecanoyl-sn-glycero-3-phosphate + CoA. It carries out the reaction 1-(9Z-octadecenoyl)-sn-glycero-3-phosphate + octadecanoyl-CoA = 1-(9Z-octadecenoyl)-2-octadecanoyl-sn-glycero-3-phosphate + CoA. It catalyses the reaction nonadecanoyl-CoA + 1-(9Z-octadecenoyl)-sn-glycero-3-phosphate = 1-(9Z)-octadecenoyl-2-nonadecanoyl-sn-glycero-3-phosphate + CoA. The enzyme catalyses 1-(9Z-octadecenoyl)-sn-glycero-3-phosphoethanolamine + (9Z)-octadecenoyl-CoA = 1,2-di-(9Z-octadecenoyl)-sn-glycero-3-phosphoethanolamine + CoA. The catalysed reaction is 1-(9Z-octadecenoyl)-sn-glycero-3-phosphocholine + (9Z)-octadecenoyl-CoA = 1,2-di-(9Z-octadecenoyl)-sn-glycero-3-phosphocholine + CoA. It carries out the reaction 1-(9Z-octadecenoyl)-sn-glycero-3-phospho-(1D-myo-inositol) + (5Z,8Z,11Z,14Z)-eicosatetraenoyl-CoA = 1-(9Z-octadecenoyl)-2-(5Z,8Z,11Z,14Z-eicosatetraenoyl)-sn-glycero-3-phospho-1D-myo-inositol + CoA. It catalyses the reaction 1-(9Z-octadecenoyl)-sn-glycero-3-phospho-L-serine + (9Z)-octadecenoyl-CoA = 1,2-di-(9Z)-octadecenoyl-sn-glycero-3-phospho-L-serine + CoA. The enzyme catalyses 1-(9Z-octadecenoyl)-sn-glycero-3-phospho-L-serine + (5Z,8Z,11Z,14Z)-eicosatetraenoyl-CoA = 1-(9Z-octadecenoyl)-2-(5Z,8Z,11Z,14Z-eicosatetraenoyl)-sn-glycero-3-phospho-L-serine + CoA. The catalysed reaction is 1-hexadecanoyl-sn-glycero-3-phosphate + (9Z)-octadecenoyl-CoA = 1-hexadecanoyl-2-(9Z-octadecenoyl)-sn-glycero-3-phosphate + CoA. It carries out the reaction 1-heptadecanoyl-sn-glycero-3-phosphate + (9Z)-octadecenoyl-CoA = 1-heptadecanoyl-2-(9Z)-octadecenoyl-sn-glycero-3-phosphate + CoA. It catalyses the reaction 1-(5Z,8Z,11Z,14Z-eicosatetraenoyl)-sn-glycero-3-phosphate + (9Z)-octadecenoyl-CoA = 1-(5Z,8Z,11Z,14Z)-eicosatetraenoyl-2-(9Z)-octadecenoyl-sn-glycero-3-phosphate + CoA. The enzyme catalyses 1-octadecanoyl-sn-glycero-3-phosphate + (9Z)-octadecenoyl-CoA = 1-octadecanoyl-2-(9Z-octadecenoyl)-sn-glycero-3-phosphate + CoA. The catalysed reaction is 1-(9Z-octadecenoyl)-sn-glycero-3-phosphate + (5Z,8Z,11Z,14Z)-eicosatetraenoyl-CoA = 1-(9Z)-octadecenoyl-2-(5Z,8Z,11Z,14Z)-eicosatetraenoyl-sn-glycero-3-phosphate + CoA. It carries out the reaction heptadecanoyl-CoA + 1-(9Z-octadecenoyl)-sn-glycero-3-phosphate = 1-(9Z)-octadecenoyl-2-heptadecanoyl-sn-glycero-3-phosphate + CoA. It catalyses the reaction 1-(9Z-octadecenoyl)-sn-glycero-3-phosphocholine + (5Z,8Z,11Z,14Z)-eicosatetraenoyl-CoA = 1-(9Z)-octadecenoyl-2-(5Z,8Z,11Z,14Z)-icosatetraenoyl-sn-glycero-3-phosphocholine + CoA. The enzyme catalyses 1-(9Z-octadecenoyl)-sn-glycero-3-phosphate + (9Z)-octadecenoyl-CoA = 1,2-di-(9Z-octadecenoyl)-sn-glycero-3-phosphate + CoA. The catalysed reaction is 1-(9Z-octadecenoyl)-sn-glycero-3-phosphate + hexadecanoyl-CoA = 1-hexadecanoyl-2-(9Z-octadecenoyl)-sn-glycero-3-phosphate + CoA. Its pathway is phospholipid metabolism; CDP-diacylglycerol biosynthesis; CDP-diacylglycerol from sn-glycerol 3-phosphate: step 2/3. Converts 1-acyl-sn-glycerol-3-phosphate (lysophosphatidic acid or LPA) into 1,2-diacyl-sn-glycerol-3-phosphate (phosphatidic acid or PA) by incorporating an acyl moiety at the sn-2 position of the glycerol backbone. Acts on LPA containing saturated or unsaturated fatty acids C15:0-C20:4 at the sn-1 position using C18:1-CoA as the acyl donor. Also acts on lysophosphatidylethanolamine using oleoyl-CoA, but not arachidonoyl-CoA, and lysophosphatidylinositol using arachidonoyl-CoA, but not oleoyl-CoA. Activity toward lysophosphatidylglycerol not detectable. In Mus musculus (Mouse), this protein is 1-acyl-sn-glycerol-3-phosphate acyltransferase epsilon (Agpat5).